A 434-amino-acid polypeptide reads, in one-letter code: Putative F-box/FBD/LRR-repeat protein At1g16940 (434 aa).

Residues 10-66 (HNIINQLPDSLLCEIFFNLPTEEVVKTSLICRRWRYVWQSLPGLDLVINGSKNYDKF) enclose the F-box domain. LRR repeat units lie at residues 72 to 99 (FMFL…MMNN), 114 to 141 (RRYV…KLHR), 164 to 189 (INFV…TMDK), 204 to 231 (CLTN…KLNR), 252 to 277 (DVAY…TISF), and 306 to 331 (MAVG…VMGF). In terms of domain architecture, FBD spans 336–385 (WGINFSDVPQCVLSSLEFVEVKAREVADMKKLWSYFMENSTVLKKFTLCL).

The polypeptide is Putative F-box/FBD/LRR-repeat protein At1g16940 (Arabidopsis thaliana (Mouse-ear cress)).